The primary structure comprises 387 residues: Signal-regulatory protein gamma (387 aa).

The N-terminal stretch at 1-28 is a signal peptide; sequence MPVPASWPHPPGPFLLLTLLLGLTEVAG. The region spanning 29-137 is the Ig-like V-type domain; that stretch reads EEELQMIQPE…ENVEFKSGPG (109 aa). At 29–360 the chain is on the extracellular side; that stretch reads EEELQMIQPE…QKDQSSDATP (332 aa). Cystine bridges form between Cys53–Cys119 and Cys168–Cys226. 2 consecutive Ig-like C1-type domains span residues 146–245 and 252–340; these read PSAP…ANLS and PTLE…LAVS. N-linked (GlcNAc...) asparagine glycosylation is found at Asn243, Asn268, Asn309, and Asn317. Cysteines 271 and 329 form a disulfide. A helical membrane pass occupies residues 361-383; that stretch reads GPASSLTALLLIAVLLGPIYVPW. Topologically, residues 384–387 are cytoplasmic; that stretch reads KQKT.

As to quaternary structure, interacts with CD47. As to expression, detected in liver, and at very low levels in brain, heart, lung, pancreas, kidney, placenta and skeletal muscle. Expressed on CD4+ T-cells, CD8+ T-cells, CD56-bright natural killer (NK) cells, CD20+ cells, and all activated NK cells. Mainly present in the paracortical T-cell area of lymph nodes, with only sparse positive cells in the mantle and in the germinal center of B-cell follicles. In the thymus, primarily expressed in the medulla on mature T-lymphocytes that have undergone thymic selection.

Its subcellular location is the membrane. Its function is as follows. Probable immunoglobulin-like cell surface receptor. On binding with CD47, mediates cell-cell adhesion. Engagement on T-cells by CD47 on antigen-presenting cells results in enhanced antigen-specific T-cell proliferation and costimulates T-cell activation. This is Signal-regulatory protein gamma (SIRPG) from Homo sapiens (Human).